Reading from the N-terminus, the 179-residue chain is Large ribosomal subunit protein uL6 (179 aa).

It belongs to the universal ribosomal protein uL6 family. Part of the 50S ribosomal subunit.

Its function is as follows. This protein binds to the 23S rRNA, and is important in its secondary structure. It is located near the subunit interface in the base of the L7/L12 stalk, and near the tRNA binding site of the peptidyltransferase center. The sequence is that of Large ribosomal subunit protein uL6 from Buchnera aphidicola subsp. Baizongia pistaciae (strain Bp).